We begin with the raw amino-acid sequence, 192 residues long: Probable apo-citrate lyase phosphoribosyl-dephospho-CoA transferase (192 aa).

This sequence belongs to the CitX family.

The enzyme catalyses apo-[citrate lyase ACP] + 2'-(5''-triphospho-alpha-D-ribosyl)-3'-dephospho-CoA = holo-[citrate lyase ACP] + diphosphate. Its function is as follows. Transfers 2-(5''-triphosphoribosyl)-3'-dephosphocoenzyme-A on a serine residue to the apo-acyl carrier protein (gamma chain) of the citrate lyase to yield holo-acyl carrier protein. This is Probable apo-citrate lyase phosphoribosyl-dephospho-CoA transferase from Streptococcus pyogenes serotype M18 (strain MGAS8232).